An 870-amino-acid chain; its full sequence is S-linalool synthase (870 aa).

The Mg(2+) site is built by aspartate 547, aspartate 551, asparagine 689, serine 693, and glutamate 697. The DDXXD motif motif lies at 547-551 (DDFFD).

The protein belongs to the terpene synthase family. Mg(2+) is required as a cofactor. Mn(2+) serves as cofactor. In terms of tissue distribution, highly expressed in cells of the transmitting tract of the stigma and style and in the epidermal cells of petals, as well as in stamens.

It catalyses the reaction (2E)-geranyl diphosphate + H2O = (S)-linalool + diphosphate. In terms of biological role, involved in the biosynthesis of the acyclic monoterpene S-linalool, a major component of the strong sweet scent of the C.breweri flowers. The sequence is that of S-linalool synthase (LIS) from Clarkia breweri (Fairy fans).